The following is a 689-amino-acid chain: Small ribosomal subunit protein mS39 (689 aa).

The transit peptide at 1-37 (MAGVSAVRWLGLRSRLGQPLTGRRAGLCKQARSCRFY) directs the protein to the mitochondrion. Residue lysine 126 is modified to N6-acetyllysine. 10 PPR repeats span residues 149 to 183 (IKDISEAALKERIELRKVKASVDMFDQLLQAGTTV), 184 to 219 (SLETTNSLLDLLCYFGDQEPSTDYHFQQTEQSEALE), 255 to 289 (NAHSYCTMIRGMVKHRAYEQALNLYTELLNNRLHA), 290 to 330 (DVYT…KVKP), 331 to 367 (NLQTFNTILKCLRRFHVFARSPALRILREMKAIGIEP), 368 to 404 (SLATYHHIIHVFDQPGDPLKRSSFIIYDIMNELMGKR), 412 to 446 (DDKFFQSAMSICSSLRDLELAYQVHGLLNTGDNWK), 454 to 488 (RNFYYSKFFDLICLMEQIDVTLKWYEDLIPSVYFP), 489 to 523 (HSQTLIHLLQALDVANRLEMIPKIWKDSKEYGHTF), and 572 to 606 (PATSLYCIAILFLRAGRTQEAWNMLELFRKHNKIP). The interval 665–689 (NLTALTSDSDTDSSSDSDSDTSEGK) is disordered. The segment covering 673–689 (SDTDSSSDSDSDTSEGK) has biased composition (acidic residues).

The protein belongs to the mitochondrion-specific ribosomal protein mS39 family. As to quaternary structure, component of the mitochondrial ribosome small subunit (28S) which comprises a 12S rRNA and about 30 distinct proteins. Associated with the 12S mitochondrial rRNA (12S mt-rRNA).

The protein resides in the mitochondrion. Mitochondrial RNA-binding protein that has a role in mitochondrial translation. The polypeptide is Small ribosomal subunit protein mS39 (PTCD3) (Pongo abelii (Sumatran orangutan)).